The following is a 460-amino-acid chain: Ecdysteroid UDP-glucosyltransferase (460 aa).

A signal peptide spans 1 to 18; that stretch reads MFISILLLALAVERILCA.

It belongs to the UDP-glycosyltransferase family.

Functionally, catalyzes the transfer of glucose from UDP-glucose to ecdysteroids which are insect molting hormones. Expression of egt interferes with normal insect development and block molting. The polypeptide is Ecdysteroid UDP-glucosyltransferase (EGT) (Lacanobia oleracea granulosis virus (LoGV)).